The primary structure comprises 228 residues: uncharacterized protein (228 aa).

A tRNA-binding domain is found at 99 to 207; that stretch reads LANKVPFVVC…PKIKVGKPFI (109 aa).

This is an uncharacterized protein from Mycoplasma genitalium (strain ATCC 33530 / DSM 19775 / NCTC 10195 / G37) (Mycoplasmoides genitalium).